A 487-amino-acid chain; its full sequence is Glycogen synthase (487 aa).

Position 23 (Lys23) interacts with ADP-alpha-D-glucose.

Belongs to the glycosyltransferase 1 family. Bacterial/plant glycogen synthase subfamily.

The enzyme catalyses [(1-&gt;4)-alpha-D-glucosyl](n) + ADP-alpha-D-glucose = [(1-&gt;4)-alpha-D-glucosyl](n+1) + ADP + H(+). Its pathway is glycan biosynthesis; glycogen biosynthesis. Functionally, synthesizes alpha-1,4-glucan chains using ADP-glucose. The chain is Glycogen synthase from Pseudomonas fluorescens (strain Pf0-1).